We begin with the raw amino-acid sequence, 614 residues long: 1-deoxy-D-xylulose-5-phosphate synthase (614 aa).

Thiamine diphosphate contacts are provided by residues H76 and 117–119 (GHS). D148 lines the Mg(2+) pocket. Residues 149–150 (GA), N177, Y285, and E366 each bind thiamine diphosphate. A Mg(2+)-binding site is contributed by N177.

This sequence belongs to the transketolase family. DXPS subfamily. Homodimer. It depends on Mg(2+) as a cofactor. Thiamine diphosphate serves as cofactor.

It carries out the reaction D-glyceraldehyde 3-phosphate + pyruvate + H(+) = 1-deoxy-D-xylulose 5-phosphate + CO2. The protein operates within metabolic intermediate biosynthesis; 1-deoxy-D-xylulose 5-phosphate biosynthesis; 1-deoxy-D-xylulose 5-phosphate from D-glyceraldehyde 3-phosphate and pyruvate: step 1/1. Catalyzes the acyloin condensation reaction between C atoms 2 and 3 of pyruvate and glyceraldehyde 3-phosphate to yield 1-deoxy-D-xylulose-5-phosphate (DXP). The chain is 1-deoxy-D-xylulose-5-phosphate synthase from Pasteurella multocida (strain Pm70).